We begin with the raw amino-acid sequence, 83 residues long: Cytochrome b559 subunit alpha (83 aa).

A helical membrane pass occupies residues 21 to 35 (VIHSITIPSLFIAGW). Position 23 (His-23) interacts with heme.

This sequence belongs to the PsbE/PsbF family. In terms of assembly, heterodimer of an alpha subunit and a beta subunit. PSII is composed of 1 copy each of membrane proteins PsbA, PsbB, PsbC, PsbD, PsbE, PsbF, PsbH, PsbI, PsbJ, PsbK, PsbL, PsbM, PsbT, PsbX, PsbY, PsbZ, Psb30/Ycf12, at least 3 peripheral proteins of the oxygen-evolving complex and a large number of cofactors. It forms dimeric complexes. Heme b is required as a cofactor.

It localises to the plastid. The protein resides in the chloroplast thylakoid membrane. In terms of biological role, this b-type cytochrome is tightly associated with the reaction center of photosystem II (PSII). PSII is a light-driven water:plastoquinone oxidoreductase that uses light energy to abstract electrons from H(2)O, generating O(2) and a proton gradient subsequently used for ATP formation. It consists of a core antenna complex that captures photons, and an electron transfer chain that converts photonic excitation into a charge separation. The polypeptide is Cytochrome b559 subunit alpha (Anthoceros angustus (Hornwort)).